We begin with the raw amino-acid sequence, 98 residues long: uncharacterized protein (98 aa).

This sequence belongs to the HesB/IscA family.

This is an uncharacterized protein from Staphylococcus aureus (strain USA300).